A 1478-amino-acid polypeptide reads, in one-letter code: GTPase-activating protein and VPS9 domain-containing protein 1 (1478 aa).

Residues 147–385 (SYLLQVLRYL…AAFLDVVIGG (239 aa)) form the Ras-GAP domain. Serine 227 is subject to Phosphoserine. Threonine 390 and threonine 458 each carry phosphothreonine. Position 460 is a phosphotyrosine (tyrosine 460). A Phosphoserine modification is found at serine 466. Threonine 470 is modified (phosphothreonine). A phosphoserine mark is found at serine 566 and serine 569. Disordered regions lie at residues 574–608 (GISEGPSNRSNSVSSLDLEGESVSELGAGPSGSNG), 739–820 (ESCS…PPSQ), and 846–874 (HYARPSHPPPDPPILEGAVGGNEARLPNF). Residues 578–588 (GPSNRSNSVSS) are compositionally biased toward polar residues. A phosphoserine mark is found at serine 742, serine 746, and serine 757. The segment covering 758–777 (SRPSTPGLSVVSGISATSED) has biased composition (polar residues). Threonine 762 bears the Phosphothreonine mark. Position 766 is a phosphoserine (serine 766). The span at 778–789 (IPNKIEDLRSEC) shows a compositional bias: basic and acidic residues. Serine 876, serine 902, serine 903, serine 908, serine 914, and serine 966 each carry phosphoserine. Over residues 889-902 (QRHSYPERLVRSRS) the composition is skewed to basic and acidic residues. Disordered stretches follow at residues 889-1023 (QRHS…PRLS) and 1043-1064 (TSPSDGAMANYESTGDNHDRDL). Composition is skewed to basic and acidic residues over residues 954–975 (DSSRGETEERKDSDDEKSDRNR) and 997–1008 (EKQEKDKDDLGP). Residues 1012–1023 (STLTDDPSPRLS) are compositionally biased toward polar residues. Phosphoserine is present on residues serine 1019, serine 1046, serine 1096, and serine 1103. One can recognise a VPS9 domain in the interval 1338-1478 (ILRDQVLHEH…EFIKTIDDRK (141 aa)).

It belongs to the GAPVD1 family. In terms of assembly, interacts with TRIP10/CIP4. Interacts with RAB5A. As to quaternary structure, (Microbial infection) Interacts with P.falciparum (strain 3D7) CK1. Expressed in erythrocytes (at protein level).

The protein resides in the membrane. Its subcellular location is the endosome. Functionally, acts both as a GTPase-activating protein (GAP) and a guanine nucleotide exchange factor (GEF), and participates in various processes such as endocytosis, insulin receptor internalization or LC2A4/GLUT4 trafficking. Acts as a GEF for the Ras-related protein RAB31 by exchanging bound GDP for free GTP, leading to regulate LC2A4/GLUT4 trafficking. In the absence of insulin, it maintains RAB31 in an active state and promotes a futile cycle between LC2A4/GLUT4 storage vesicles and early endosomes, retaining LC2A4/GLUT4 inside the cells. Upon insulin stimulation, it is translocated to the plasma membrane, releasing LC2A4/GLUT4 from intracellular storage vesicles. Also involved in EGFR trafficking and degradation, possibly by promoting EGFR ubiquitination and subsequent degradation by the proteasome. Has GEF activity for Rab5 and GAP activity for Ras. This is GTPase-activating protein and VPS9 domain-containing protein 1 (GAPVD1) from Homo sapiens (Human).